Reading from the N-terminus, the 156-residue chain is Transcriptional repressor NrdR (156 aa).

A zinc finger spans residues 3-34; sequence CPFCHSDNDKVQDSRTAEAGYVVRRKRLCQTC. The region spanning 49–139 is the ATP-cone domain; the sequence is VRVVKSDETR…VYRDFDDAKD (91 aa).

Belongs to the NrdR family. Requires Zn(2+) as cofactor.

Functionally, negatively regulates transcription of bacterial ribonucleotide reductase nrd genes and operons by binding to NrdR-boxes. The polypeptide is Transcriptional repressor NrdR (Rhodopirellula baltica (strain DSM 10527 / NCIMB 13988 / SH1)).